The chain runs to 348 residues: Dihydroorotase (348 aa).

Residues H13 and H15 each contribute to the Zn(2+) site. Residues 15–17 (HLR) and N41 contribute to the substrate site. Zn(2+) contacts are provided by K99, H136, and H174. An N6-carboxylysine modification is found at K99. H136 is a substrate binding site. L219 contacts substrate. Position 247 (D247) interacts with Zn(2+). D247 is an active-site residue. 2 residues coordinate substrate: H251 and A263.

Belongs to the metallo-dependent hydrolases superfamily. DHOase family. Class II DHOase subfamily. Homodimer. Requires Zn(2+) as cofactor.

The catalysed reaction is (S)-dihydroorotate + H2O = N-carbamoyl-L-aspartate + H(+). It participates in pyrimidine metabolism; UMP biosynthesis via de novo pathway; (S)-dihydroorotate from bicarbonate: step 3/3. Catalyzes the reversible cyclization of carbamoyl aspartate to dihydroorotate. The protein is Dihydroorotase of Rhizobium johnstonii (strain DSM 114642 / LMG 32736 / 3841) (Rhizobium leguminosarum bv. viciae).